A 599-amino-acid chain; its full sequence is NADH-quinone oxidoreductase subunit C/D (599 aa).

The segment at 1 to 189 (MTDLTTHDLA…DPFVLTKQKE (189 aa)) is NADH dehydrogenase I subunit C. The segment at 213–599 (DFMFLNLGPN…IDFVMSDVDR (387 aa)) is NADH dehydrogenase I subunit D.

This sequence in the N-terminal section; belongs to the complex I 30 kDa subunit family. In the C-terminal section; belongs to the complex I 49 kDa subunit family. As to quaternary structure, NDH-1 is composed of 13 different subunits. Subunits NuoB, CD, E, F, and G constitute the peripheral sector of the complex.

The protein resides in the cell inner membrane. It carries out the reaction a quinone + NADH + 5 H(+)(in) = a quinol + NAD(+) + 4 H(+)(out). In terms of biological role, NDH-1 shuttles electrons from NADH, via FMN and iron-sulfur (Fe-S) centers, to quinones in the respiratory chain. The immediate electron acceptor for the enzyme in this species is believed to be ubiquinone. Couples the redox reaction to proton translocation (for every two electrons transferred, four hydrogen ions are translocated across the cytoplasmic membrane), and thus conserves the redox energy in a proton gradient. In Pectobacterium carotovorum subsp. carotovorum (strain PC1), this protein is NADH-quinone oxidoreductase subunit C/D.